A 335-amino-acid chain; its full sequence is NmrA-like family domain-containing oxidoreductase ptmS (335 aa).

NADP(+) is bound by residues 12 to 17 (GATGNQ), 39 to 43 (RDPNS), 60 to 61 (DG), 81 to 88 (INSDDPVF), Lys-139, and 163 to 166 (FLEN). The segment at 161 to 206 (GYFLENFLFKQGAFIMGGFPWETDAEGYLTWKVPYWGGEEQIPFLS) is interaction with ASS1.

The protein belongs to the NmrA-type oxidoreductase family.

The protein operates within secondary metabolite biosynthesis. In terms of biological role, nmrA-like family domain-containing oxidoreductase; part of the gene cluster that mediates the biosynthesis of the indole diterpenes penitrems. The geranylgeranyl diphosphate (GGPP) synthase ptmG catalyzes the first step in penitrem biosynthesis via conversion of farnesyl pyrophosphate and isopentyl pyrophosphate into geranylgeranyl pyrophosphate (GGPP). Condensation of indole-3-glycerol phosphate with GGPP by the prenyl transferase ptmC then forms 3-geranylgeranylindole (3-GGI). Epoxidation by the FAD-dependent monooxygenase ptmM leads to a epoxidized-GGI that is substrate of the terpene cyclase ptmB for cyclization to yield paspaline. Paspaline is subsequently converted to 13-desoxypaxilline by the cytochrome P450 monooxygenase ptmP, the latter being then converted to paxilline by the cytochrome P450 monooxygenase ptmQ. Paxilline is converted to beta-paxitriol via C-10 ketoreduction by the short-chain dehydrogenase ptmH which can be monoprenylated at the C-20 by the indole diterpene prenyltransferase ptmD. A two-step elimination (acetylation and elimination) process performed by the O-acetyltransferase ptmV and ptmI leads to the production of the prenylated form of penijanthine. The FAD-linked oxidoreductase ptmO then converts the prenylated form of penijanthine into PC-M5 which is in turn transformed into PC-M4 by the aromatic dimethylallyltransferase ptmE. Five sequential oxidative transformations performed by the cytochrome P450 monooxygenases ptmK, ptmU, ptmL, ptmN and ptmJ yield the various penitrem compounds. PtmK, ptmU and ptmM are involved in the formation of the key bicyclic ring of penitrem C via the formation of the intermediates secopenitrem D and penitrem D. PtmL catalyzes the epoxidation of penitrem D and C to yield penitrem B and F, respectively. PtmJ catalyzes the last benzylic hydroxylation to convert penitrem B to prenitrem E and penitrem F to penitrem A. The chain is NmrA-like family domain-containing oxidoreductase ptmS from Penicillium ochrochloron.